The chain runs to 226 residues: Ribonuclease 3 (226 aa).

The 123-residue stretch at 6–128 (VNQLQKKLGY…LIGAIFLDSD (123 aa)) folds into the RNase III domain. Glutamate 41 lines the Mg(2+) pocket. Residue aspartate 45 is part of the active site. Residues aspartate 114 and glutamate 117 each coordinate Mg(2+). The active site involves glutamate 117. Residues 155–225 (DPKTRLQEYL…AEQALIQLEL (71 aa)) form the DRBM domain.

Belongs to the ribonuclease III family. Homodimer. Requires Mg(2+) as cofactor.

Its subcellular location is the cytoplasm. It carries out the reaction Endonucleolytic cleavage to 5'-phosphomonoester.. Digests double-stranded RNA. Involved in the processing of primary rRNA transcript to yield the immediate precursors to the large and small rRNAs (23S and 16S). Processes some mRNAs, and tRNAs when they are encoded in the rRNA operon. Processes pre-crRNA and tracrRNA of type II CRISPR loci if present in the organism. This Proteus mirabilis (strain HI4320) protein is Ribonuclease 3.